The chain runs to 539 residues: Phosphoenolpyruvate carboxykinase (ATP) (539 aa).

Arg-64, Tyr-206, and Lys-212 together coordinate substrate. Residues Lys-212, His-231, and 247 to 255 (GLSGTGKTT) each bind ATP. Residues Lys-212 and His-231 each contribute to the Mn(2+) site. Asp-268 serves as a coordination point for Mn(2+). ATP contacts are provided by residues Glu-296, Arg-332, 448–449 (RI), and Thr-454. Arg-332 provides a ligand contact to substrate.

Belongs to the phosphoenolpyruvate carboxykinase (ATP) family. In terms of assembly, monomer. Mn(2+) serves as cofactor.

Its subcellular location is the cytoplasm. The catalysed reaction is oxaloacetate + ATP = phosphoenolpyruvate + ADP + CO2. It participates in carbohydrate biosynthesis; gluconeogenesis. Functionally, involved in the gluconeogenesis. Catalyzes the conversion of oxaloacetate (OAA) to phosphoenolpyruvate (PEP) through direct phosphoryl transfer between the nucleoside triphosphate and OAA. The sequence is that of Phosphoenolpyruvate carboxykinase (ATP) from Hamiltonella defensa subsp. Acyrthosiphon pisum (strain 5AT).